A 227-amino-acid polypeptide reads, in one-letter code: Putative molybdenum transport system permease protein YvgM (227 aa).

Transmembrane regions (helical) follow at residues 17-37, 57-77, 94-114, 142-162, and 201-221; these read VVLSFQVAAVAGIVVIILGTL, FMLPLVLPPTVVGFILIVIFG, VIFTWWAAVIASAVVAFPLMY, VFIHISVPLAYPSLLTGSILS, and TLAWAWVVCIVVISFLMLFFI. The ABC transmembrane type-1 domain occupies 17 to 221; sequence VVLSFQVAAV…VISFLMLFFI (205 aa).

This sequence belongs to the binding-protein-dependent transport system permease family. CysTW subfamily.

The protein localises to the cell membrane. In terms of biological role, could be part of the binding-protein-dependent transport system for molybdenum; probably responsible for the translocation of the substrate across the membrane. This Bacillus subtilis (strain 168) protein is Putative molybdenum transport system permease protein YvgM (yvgM).